A 496-amino-acid polypeptide reads, in one-letter code: Probable cytosol aminopeptidase (496 aa).

Mn(2+) contacts are provided by Lys-262 and Asp-267. Lys-274 is a catalytic residue. Positions 285, 344, and 346 each coordinate Mn(2+). The active site involves Arg-348.

This sequence belongs to the peptidase M17 family. Mn(2+) serves as cofactor.

It localises to the cytoplasm. It catalyses the reaction Release of an N-terminal amino acid, Xaa-|-Yaa-, in which Xaa is preferably Leu, but may be other amino acids including Pro although not Arg or Lys, and Yaa may be Pro. Amino acid amides and methyl esters are also readily hydrolyzed, but rates on arylamides are exceedingly low.. The catalysed reaction is Release of an N-terminal amino acid, preferentially leucine, but not glutamic or aspartic acids.. Presumably involved in the processing and regular turnover of intracellular proteins. Catalyzes the removal of unsubstituted N-terminal amino acids from various peptides. The protein is Probable cytosol aminopeptidase of Rhizobium leguminosarum bv. trifolii (strain WSM2304).